A 256-amino-acid chain; its full sequence is tRNA (guanine-N(1)-)-methyltransferase (256 aa).

Residues Gly117 and 137-142 each bind S-adenosyl-L-methionine; that span reads LGDFVL.

Belongs to the RNA methyltransferase TrmD family. Homodimer.

It is found in the cytoplasm. The catalysed reaction is guanosine(37) in tRNA + S-adenosyl-L-methionine = N(1)-methylguanosine(37) in tRNA + S-adenosyl-L-homocysteine + H(+). Its function is as follows. Specifically methylates guanosine-37 in various tRNAs. The protein is tRNA (guanine-N(1)-)-methyltransferase of Methylibium petroleiphilum (strain ATCC BAA-1232 / LMG 22953 / PM1).